Here is a 461-residue protein sequence, read N- to C-terminus: Cysteine--tRNA ligase (461 aa).

Zn(2+) is bound at residue Cys-28. The 'HIGH' region signature appears at 30–40; the sequence is ITVYDLCHIGH. The Zn(2+) site is built by Cys-209, His-234, and Glu-238. The short motif at 266 to 270 is the 'KMSKS' region element; it reads KMSKS. ATP is bound at residue Lys-269.

This sequence belongs to the class-I aminoacyl-tRNA synthetase family. Monomer. It depends on Zn(2+) as a cofactor.

The protein localises to the cytoplasm. It carries out the reaction tRNA(Cys) + L-cysteine + ATP = L-cysteinyl-tRNA(Cys) + AMP + diphosphate. This chain is Cysteine--tRNA ligase, found in Escherichia coli (strain SMS-3-5 / SECEC).